We begin with the raw amino-acid sequence, 113 residues long: MDMKFWTTKEYKKIKRDFIIRNFAFGFCYFLFLISFIMCIVCFIISINFEVEIILVILFPFLLLILSVWNLFDLIMEHISEIKRFKVTVLKKQIEELEGKMLRGLRVGVDKIE.

2 consecutive transmembrane segments (helical) span residues 25–45 (FGFC…CFII) and 49–69 (FEVE…LSVW).

The protein localises to the host membrane. This is an uncharacterized protein from Spiroplasma citri (SpV1).